The sequence spans 529 residues: AAA ATPase forming ring-shaped complexes (529 aa).

Positions 15–62 (MERQDERLRSLSEANDRLMAKNHALAKALTRATQELTKAKAQLNQLAG) form a coiled coil. 253–258 (GNGKTL) is an ATP binding site.

The protein belongs to the AAA ATPase family. As to quaternary structure, homohexamer. Assembles into a hexameric ring structure.

This Bifidobacterium dentium (strain ATCC 27534 / DSM 20436 / JCM 1195 / Bd1) protein is AAA ATPase forming ring-shaped complexes.